Here is a 443-residue protein sequence, read N- to C-terminus: EGF-containing fibulin-like extracellular matrix protein 2 (443 aa).

The first 25 residues, M1–A25, serve as a signal peptide directing secretion. The EGF-like 1; atypical domain occupies Y36–L81. Intrachain disulfides connect C58/C121, C65/C80, C71/C109, C127/C140, C134/C149, C151/C162, C168/C177, C173/C186, C188/C201, C207/C217, C213/C226, C228/C241, C247/C258, C254/C267, C269/C281, C287/C300, C294/C309, and C315/C327. Residues D123–V163 enclose the EGF-like 2; calcium-binding domain. Residues D164–V202 enclose the EGF-like 3; calcium-binding domain. Residue N198 is glycosylated (N-linked (GlcNAc...) asparagine). Residues D203–S242 enclose the EGF-like 4; calcium-binding domain. The EGF-like 5; calcium-binding domain occupies D243 to Q282. Residues D283–F328 enclose the EGF-like 6; calcium-binding domain. N-linked (GlcNAc...) asparagine glycosylation is present at N394.

The protein belongs to the fibulin family. In terms of assembly, homodimer; disulfide-linked. Multimer; allows heparin binding. Monomer. Interacts with FBN1 (via N-terminal domain); this interaction inhibits EFEMP2 binding to LOX and ELN. Interacts with LOX (via propeptide); this interaction is strong and facilitates formation of ternary complexes with ELN during elastic fiber assembly; this interaction limits interaction of EFEMP2 with FBLN5. Interacts with PITX2. Interacts with ELN with moderate affinity; this interaction regulates ELN self-assembly maturation stage. Interacts with FBLN5 with moderate affinity. Interacts with LOXL1 (via propeptide), LTBP1 and TGFB1 stronger than with LOXL2 and LTBP3. Interacts with PCOLCE. Interacts with collagen type IV trimer (COL4A1-COL4A1-COL4A2), NID2 and moderately with COL15A1-derived endostatin. Interacts with EMILIN1; this interaction promotes the incorporation of EFEMP2 into the extracellular matrix. Interacts with LTBP4; the LTBP4 long form (LTBP4L) has a stronger binding affinity than the LTBP4 short form and the LTBP4 long form promotes fibrillar deposition of EFEMP2. In terms of processing, N-glycosylated; contains mostly complex-type glycans. Not O-glycosylated. Post-translationally, cleaved by ELANE; produces a 50-55 kDa fragment. Cleaved by MMP2 and MMP9; produces several fragments.

Its subcellular location is the secreted. It is found in the extracellular space. The protein localises to the extracellular matrix. The protein resides in the basement membrane. In terms of biological role, plays a crucial role in elastic fiber formation in tissue, and in the formation of ultrastructural connections between elastic laminae and smooth muscle cells in the aorta, therefore participates in terminal differentiation and maturation of smooth muscle cell (SMC) and in the mechanical properties and wall integrity maintenance of the aorta. In addition, is involved in the control of collagen fibril assembly in tissue throught proteolytic activation of LOX leading to cross- linking of collagen and elastin. Also promotes ELN coacervation and participates in the deposition of ELN coacervates on to microfibrils but also regulates ELN cross- linking through LOX interaction. Moreover adheres to the cells through heparin binding in a calcium-dependent manner and regulates vascularlar smooth muscle cells proliferation through angiotensin signaling. In Cricetulus griseus (Chinese hamster), this protein is EGF-containing fibulin-like extracellular matrix protein 2.